Here is a 182-residue protein sequence, read N- to C-terminus: UPF0301 protein NGK_1355 (182 aa).

This sequence belongs to the UPF0301 (AlgH) family.

This Neisseria gonorrhoeae (strain NCCP11945) protein is UPF0301 protein NGK_1355.